We begin with the raw amino-acid sequence, 99 residues long: Large ribosomal subunit protein uL23 (99 aa).

The protein belongs to the universal ribosomal protein uL23 family. In terms of assembly, part of the 50S ribosomal subunit. Contacts protein L29, and trigger factor when it is bound to the ribosome.

One of the early assembly proteins it binds 23S rRNA. One of the proteins that surrounds the polypeptide exit tunnel on the outside of the ribosome. Forms the main docking site for trigger factor binding to the ribosome. The protein is Large ribosomal subunit protein uL23 of Pseudomonas entomophila (strain L48).